The chain runs to 554 residues: Phenylalanine--tRNA ligase beta subunit (554 aa).

The 76-residue stretch at 276–351 (LTPKSRIISV…INYGYEKFDG (76 aa)) folds into the B5 domain. Residues aspartate 329, aspartate 335, glutamate 338, and glutamate 339 each coordinate Mg(2+).

This sequence belongs to the phenylalanyl-tRNA synthetase beta subunit family. Type 2 subfamily. Tetramer of two alpha and two beta subunits. Mg(2+) serves as cofactor.

The protein resides in the cytoplasm. It catalyses the reaction tRNA(Phe) + L-phenylalanine + ATP = L-phenylalanyl-tRNA(Phe) + AMP + diphosphate + H(+). The protein is Phenylalanine--tRNA ligase beta subunit of Methanococcus maripaludis (strain DSM 14266 / JCM 13030 / NBRC 101832 / S2 / LL).